The sequence spans 591 residues: L-fucose isomerase (591 aa).

Active-site proton acceptor residues include Glu-337 and Asp-361. Positions 337, 361, and 528 each coordinate Mn(2+).

Belongs to the L-fucose isomerase family. As to quaternary structure, homohexamer. Mn(2+) is required as a cofactor.

It is found in the cytoplasm. The catalysed reaction is L-fucose = L-fuculose. The enzyme catalyses D-arabinose = D-ribulose. It carries out the reaction L-xylopyranose = L-xylulose. It functions in the pathway carbohydrate degradation; L-fucose degradation; L-lactaldehyde and glycerone phosphate from L-fucose: step 1/3. With respect to regulation, inhibited by ribitol, L-arabitol and dulcitol. Isomerization of L-xylulose to L-xylose is inhibited by xylitol. Functionally, converts the aldose L-fucose into the corresponding ketose L-fuculose. Also converts D-arabinose into D-ribulose. In addition, catalyzes the isomerization of L-xylulose to L-xylose. This Escherichia coli (strain K12) protein is L-fucose isomerase.